The chain runs to 365 residues: Phosphate acyltransferase (365 aa).

This sequence belongs to the PlsX family. As to quaternary structure, homodimer. Probably interacts with PlsY.

Its subcellular location is the cytoplasm. The catalysed reaction is a fatty acyl-[ACP] + phosphate = an acyl phosphate + holo-[ACP]. It participates in lipid metabolism; phospholipid metabolism. Functionally, catalyzes the reversible formation of acyl-phosphate (acyl-PO(4)) from acyl-[acyl-carrier-protein] (acyl-ACP). This enzyme utilizes acyl-ACP as fatty acyl donor, but not acyl-CoA. The sequence is that of Phosphate acyltransferase from Klebsiella pneumoniae (strain 342).